The primary structure comprises 180 residues: Prothoracicotropic hormone (180 aa).

Residues methionine 1–alanine 15 form the signal peptide. Positions glutamate 16–valine 64 are excised as a propeptide. 2 disulfides stabilise this stretch: cysteine 88–cysteine 123 and cysteine 111–cysteine 175.

Homodimer; disulfide-linked.

The protein localises to the secreted. Functionally, PTTH is a brain secretory polypeptide of insects which stimulates the prothoracic glands to produce and release ecdysone, the steroid essential to insect development. In Camponotus floridanus (Florida carpenter ant), this protein is Prothoracicotropic hormone.